Reading from the N-terminus, the 100-residue chain is Urease subunit gamma (100 aa).

Belongs to the urease gamma subunit family. As to quaternary structure, heterotrimer of UreA (gamma), UreB (beta) and UreC (alpha) subunits. Three heterotrimers associate to form the active enzyme.

The protein localises to the cytoplasm. The catalysed reaction is urea + 2 H2O + H(+) = hydrogencarbonate + 2 NH4(+). The protein operates within nitrogen metabolism; urea degradation; CO(2) and NH(3) from urea (urease route): step 1/1. The sequence is that of Urease subunit gamma from Rhizobium rhizogenes (strain K84 / ATCC BAA-868) (Agrobacterium radiobacter).